The following is a 209-amino-acid chain: uncharacterized protein (209 aa).

Residues 41–76 (NVENLCLIRNKLKTDIENLLENKIDVENKLLVLRNQ) adopt a coiled-coil conformation.

This is an uncharacterized protein from Acanthamoeba polyphaga (Amoeba).